The chain runs to 410 residues: MTATKQTAQVTAVADGTVVTPKGFQAAGVHAGLRYSKKDLGVILCDVPASAAAVYTQSHFQAAPLKVTQASLAVEQKLQAVIVNSACANACTGEQGLKDAYEMRELCAKQFGLALHHVAVASTGVIGEYLPMEKIRAGIKQLVPGVTMADAEAFQTAILTTDTVMKRACYQTTVDGKTVTVGGAAKGSGMIHPNMATMLAFITTDANISSAVLHDALRSITDVSFNQITVDGDTSTNDMVVVMASGLAGNDELTPNHPDWEHFYEALRKTCEDLAKQIARDGEGATKLIEVRVRGAKTDEEAKKIAKQIVGSNLVKTAVYGADANWGRIIGAIGYSDAEVNPDNVDVAIGPIVMLKGSEPQPFSEEEATAYLQQETVVIEVDLHLGDGFGVAWGCDLTYDYVKINASYRT.

Residues T160, K186, T197, E283, N405, and T410 each contribute to the substrate site. Catalysis depends on T197, which acts as the Nucleophile.

The protein belongs to the ArgJ family. As to quaternary structure, heterotetramer of two alpha and two beta chains.

It is found in the cytoplasm. It carries out the reaction N(2)-acetyl-L-ornithine + L-glutamate = N-acetyl-L-glutamate + L-ornithine. It catalyses the reaction L-glutamate + acetyl-CoA = N-acetyl-L-glutamate + CoA + H(+). Its pathway is amino-acid biosynthesis; L-arginine biosynthesis; L-ornithine and N-acetyl-L-glutamate from L-glutamate and N(2)-acetyl-L-ornithine (cyclic): step 1/1. It functions in the pathway amino-acid biosynthesis; L-arginine biosynthesis; N(2)-acetyl-L-ornithine from L-glutamate: step 1/4. Catalyzes two activities which are involved in the cyclic version of arginine biosynthesis: the synthesis of N-acetylglutamate from glutamate and acetyl-CoA as the acetyl donor, and of ornithine by transacetylation between N(2)-acetylornithine and glutamate. The chain is Arginine biosynthesis bifunctional protein ArgJ from Geobacillus kaustophilus (strain HTA426).